The primary structure comprises 662 residues: Probable quinol oxidase subunit 1 (662 aa).

The next 2 membrane-spanning stretches (helical) occupy residues 14–34 (WMII…IAVI) and 56–76 (IGIM…IDAL). Histidine 102 lines the Fe(II)-heme a pocket. 8 helical membrane passes run 103-123 (GVIM…NVVI), 140-160 (VSFW…IVGG), 187-207 (IAIQ…FVTI), 228-248 (FITT…LALM), 273-293 (FFWV…FGMY), 311-331 (MIWA…HHFF), 336-356 (GALI…PTGV), and 376-396 (MLFS…GVML). Residues histidine 279, tyrosine 283, histidine 328, and histidine 329 each coordinate Cu cation. The 1'-histidyl-3'-tyrosine (His-Tyr) cross-link spans 279–283 (HPEVY). Residue histidine 414 coordinates heme a3. The next 5 membrane-spanning stretches (helical) occupy residues 415 to 435 (FHYT…IFWY), 451 to 471 (CFWF…ILGL), 492 to 512 (FIST…VASI), 587 to 604 (PVGF…FFLI), and 608 to 627 (IVPA…WRSF). Histidine 416 is a Fe(II)-heme a binding site.

It belongs to the heme-copper respiratory oxidase family. Cu cation serves as cofactor. The cofactor is ferriheme a. It depends on Heme A3. as a cofactor.

The protein localises to the cell membrane. The enzyme catalyses 2 a quinol + O2 = 2 a quinone + 2 H2O. The protein operates within energy metabolism; oxidative phosphorylation. Catalyzes quinol oxidation with the concomitant reduction of oxygen to water. The sequence is that of Probable quinol oxidase subunit 1 (qoxB) from Staphylococcus epidermidis (strain ATCC 35984 / DSM 28319 / BCRC 17069 / CCUG 31568 / BM 3577 / RP62A).